A 100-amino-acid polypeptide reads, in one-letter code: NAD(P)H-quinone oxidoreductase subunit 4L, chloroplastic (100 aa).

Helical transmembrane passes span 1–21, 31–51, and 60–80; these read MLEH…YGLI, MCLE…SDFF, and IFSI…PAIL.

Belongs to the complex I subunit 4L family. NDH is composed of at least 16 different subunits, 5 of which are encoded in the nucleus.

It is found in the plastid. The protein resides in the chloroplast thylakoid membrane. It carries out the reaction a plastoquinone + NADH + (n+1) H(+)(in) = a plastoquinol + NAD(+) + n H(+)(out). The catalysed reaction is a plastoquinone + NADPH + (n+1) H(+)(in) = a plastoquinol + NADP(+) + n H(+)(out). Its function is as follows. NDH shuttles electrons from NAD(P)H:plastoquinone, via FMN and iron-sulfur (Fe-S) centers, to quinones in the photosynthetic chain and possibly in a chloroplast respiratory chain. The immediate electron acceptor for the enzyme in this species is believed to be plastoquinone. Couples the redox reaction to proton translocation, and thus conserves the redox energy in a proton gradient. The sequence is that of NAD(P)H-quinone oxidoreductase subunit 4L, chloroplastic from Cucumis sativus (Cucumber).